A 243-amino-acid chain; its full sequence is MSGHSKWSTIKRKKGTLDAKRNKIFTKLIREISIAARMGGGDIDSNPRLRLAVNKARVANMPKDNIEKAIKKGIGDNMGSEYFKLTYEAYALYGVALIIKCLTDNKNRTASEVRSVLSKSGGSLGAPGSVSYMFHKKGLISYNLDKYHEDEIIELALEAGAEDIYSEGSQVEVITSADNFESVSSILRTKFEEDIAEVALVPESKVALDKEQMDKVLAIIEKLEDCDDVQEVYHNLEIVDDIC.

The protein belongs to the TACO1 family.

It localises to the cytoplasm. This Borrelia recurrentis (strain A1) protein is Probable transcriptional regulatory protein BRE_29.